The sequence spans 123 residues: Protein Rev (123 aa).

Ser-5 is subject to Phosphoserine; by host CK2. Residues 18 to 26 (IIKLLYQSS) are homomultimerization. The interval 25-50 (SSPCPNPRGSRQARKNRRRRWRARQR) is disordered. Positions 34 to 50 (SRQARKNRRRRWRARQR) match the Nuclear localization signal and RNA-binding (RRE) motif. Residues 35 to 49 (RQARKNRRRRWRARQ) show a composition bias toward basic residues. The Nuclear export signal and binding to XPO1 signature appears at 73–84 (LQLPPIERLRLD). Positions 86-123 (SESCGTSGTQQPQGTETGVGGPQISVESSAVLGSGTKN) are disordered. Residues 88-101 (SCGTSGTQQPQGTE) are compositionally biased toward polar residues. Ser-92 bears the Phosphoserine; by host mark.

The protein belongs to the HIV-1 REV protein family. As to quaternary structure, homomultimer; when bound to the RRE. Multimeric assembly is essential for activity and may involve XPO1. Binds to human KPNB1, XPO1, TNPO1, RANBP5 and IPO7. Interacts with the viral Integrase. Interacts with human KHDRBS1. Interacts with human NAP1; this interaction decreases Rev multimerization and stimulates its activity. Interacts with human DEAD-box helicases DDX3 and DDX24; these interactions may serve for viral RNA export to the cytoplasm and packaging, respectively. Interacts with human PSIP1; this interaction may inhibit HIV-1 DNA integration by promoting dissociation of the Integrase-LEDGF/p75 complex. Asymmetrically arginine dimethylated at one site by host PRMT6. Methylation impairs the RNA-binding activity and export of viral RNA from the nucleus to the cytoplasm. In terms of processing, phosphorylated by protein kinase CK2. Presence of, and maybe binding to the N-terminus of the regulatory beta subunit of CK2 is necessary for CK2-mediated Rev's phosphorylation.

It localises to the host nucleus. The protein localises to the host nucleolus. Its subcellular location is the host cytoplasm. In terms of biological role, escorts unspliced or incompletely spliced viral pre-mRNAs (late transcripts) out of the nucleus of infected cells. These pre-mRNAs carry a recognition sequence called Rev responsive element (RRE) located in the env gene, that is not present in fully spliced viral mRNAs (early transcripts). This function is essential since most viral proteins are translated from unspliced or partially spliced pre-mRNAs which cannot exit the nucleus by the pathway used by fully processed cellular mRNAs. Rev itself is translated from a fully spliced mRNA that readily exits the nucleus. Rev's nuclear localization signal (NLS) binds directly to KPNB1/Importin beta-1 without previous binding to KPNA1/Importin alpha-1. KPNB1 binds to the GDP bound form of RAN (Ran-GDP) and targets Rev to the nucleus. In the nucleus, the conversion from Ran-GDP to Ran-GTP dissociates Rev from KPNB1 and allows Rev's binding to the RRE in viral pre-mRNAs. Rev multimerization on the RRE via cooperative assembly exposes its nuclear export signal (NES) to the surface. Rev can then form a complex with XPO1/CRM1 and Ran-GTP, leading to nuclear export of the complex. Conversion from Ran-GTP to Ran-GDP mediates dissociation of the Rev/RRE/XPO1/RAN complex, so that Rev can return to the nucleus for a subsequent round of export. Beside KPNB1, also seems to interact with TNPO1/Transportin-1, RANBP5/IPO5 and IPO7/RANBP7 for nuclear import. The nucleoporin-like HRB/RIP is an essential cofactor that probably indirectly interacts with Rev to release HIV RNAs from the perinuclear region to the cytoplasm. This Human immunodeficiency virus type 1 group M subtype A (isolate U455) (HIV-1) protein is Protein Rev.